The following is an 86-amino-acid chain: Exodeoxyribonuclease 7 small subunit (86 aa).

This sequence belongs to the XseB family. In terms of assembly, heterooligomer composed of large and small subunits.

The protein resides in the cytoplasm. It carries out the reaction Exonucleolytic cleavage in either 5'- to 3'- or 3'- to 5'-direction to yield nucleoside 5'-phosphates.. In terms of biological role, bidirectionally degrades single-stranded DNA into large acid-insoluble oligonucleotides, which are then degraded further into small acid-soluble oligonucleotides. This Bacillus licheniformis (strain ATCC 14580 / DSM 13 / JCM 2505 / CCUG 7422 / NBRC 12200 / NCIMB 9375 / NCTC 10341 / NRRL NRS-1264 / Gibson 46) protein is Exodeoxyribonuclease 7 small subunit.